A 475-amino-acid polypeptide reads, in one-letter code: Gelsolin-like protein 1 (475 aa).

An actin binding, actin severing, Ca-sensitive region spans residues Met1–Lys131. The necessary for barbed end capping activity stretch occupies residues Met1–Asp239. The Gelsolin-like 1 repeat unit spans residues Phe27–Leu105. The segment at Asp70–Gly73 is actin-actin interfilament contact point. The required for synapse elimination during development stretch occupies residues Ser106 to Arg147. A required for phosphatidylinositol 4,5-bisphosphate binding and regulation region spans residues Trp133–Val227. Gelsolin-like repeat units follow at residues Cys148–Ile208, Arg275–Phe341, and Glu375–Phe447. The segment at Asp240 to His475 is F- and G-actin binding, Ca-independent. The tract at residues Thr248–Trp348 is inhibitory for phosphatidylinositol 4,5-bisphosphate binding activity.

Belongs to the villin/gelsolin family. As to quaternary structure, monomer. Binds to actin monomers and filaments. In terms of processing, cleavage by caspase ced-3 activates its actin-severing function and is required for the elimination of presynaptic components during development.

The protein localises to the cytoplasm. Its subcellular location is the cytoskeleton. In terms of biological role, calcium-regulated, actin-modulating protein that binds to the plus (or barbed) ends of actin monomers or filaments, preventing monomer exchange (end-blocking or capping). Binds actin but does not nucleate actin polymerization, albeit slows down elongation by blocking the barbed ends. By promoting actin depolymerization, required for the elimination of presynaptic components downstream of the egl-1, ced-4 and ced-3 apoptotic pathway during larval development. The protein is Gelsolin-like protein 1 of Caenorhabditis elegans.